The primary structure comprises 256 residues: Probable hydroxyacylglutathione hydrolase glo2 (256 aa).

Zn(2+)-binding residues include H63, H65, D67, H68, H118, and D139. Substrate contacts are provided by residues R148, 178 to 180, and 250 to 253; these read HEY and RDMK. H178 is a Zn(2+) binding site.

The protein belongs to the metallo-beta-lactamase superfamily. Glyoxalase II family. Zn(2+) serves as cofactor.

The protein resides in the cytoplasm. It localises to the nucleus. It catalyses the reaction an S-(2-hydroxyacyl)glutathione + H2O = a 2-hydroxy carboxylate + glutathione + H(+). The catalysed reaction is (R)-S-lactoylglutathione + H2O = (R)-lactate + glutathione + H(+). Its pathway is secondary metabolite metabolism; methylglyoxal degradation; (R)-lactate from methylglyoxal: step 2/2. In terms of biological role, thiolesterase that catalyzes the hydrolysis of S-D-lactoylglutathione to form glutathione and D-lactic acid. Involved in the metabolism of methylglyoxal, a toxic compound for yeast proliferation, by converting methylglyoxal to lactate via S-D-lactoylglutathione by sequential enzyme reactions catalyzed by glyoxalase I and glyoxalase II. This Schizosaccharomyces pombe (strain 972 / ATCC 24843) (Fission yeast) protein is Probable hydroxyacylglutathione hydrolase glo2 (glo2).